Reading from the N-terminus, the 410-residue chain is Methylamine dehydrogenase heavy chain (410 aa).

The N-terminal stretch at 1 to 35 (MTHAYTKVRQALCYGSATLGAAALAALIAAGSAAA) is a signal peptide.

This sequence belongs to the aromatic amine dehydrogenase heavy chain family. Tetramer of two light and two heavy chains.

It localises to the periplasm. The catalysed reaction is 2 oxidized [amicyanin] + methylamine + H2O = 2 reduced [amicyanin] + formaldehyde + NH4(+) + 2 H(+). Methylamine dehydrogenase carries out the oxidation of methylamine. Electrons are passed from methylamine dehydrogenase to amicyanin. This Methylorubrum extorquens (strain ATCC 14718 / DSM 1338 / JCM 2805 / NCIMB 9133 / AM1) (Methylobacterium extorquens) protein is Methylamine dehydrogenase heavy chain (mauB).